A 457-amino-acid polypeptide reads, in one-letter code: Serine--tRNA ligase (457 aa).

L-serine is bound at residue 252-254; it reads TAE. Residues 283–285 and V299 each bind ATP; that span reads RKE. Residue E306 participates in L-serine binding. 370–373 serves as a coordination point for ATP; that stretch reads EMVS. Residue T406 coordinates L-serine.

The protein belongs to the class-II aminoacyl-tRNA synthetase family. Type-1 seryl-tRNA synthetase subfamily. In terms of assembly, homodimer. The tRNA molecule binds across the dimer.

Its subcellular location is the cytoplasm. The enzyme catalyses tRNA(Ser) + L-serine + ATP = L-seryl-tRNA(Ser) + AMP + diphosphate + H(+). It catalyses the reaction tRNA(Sec) + L-serine + ATP = L-seryl-tRNA(Sec) + AMP + diphosphate + H(+). It functions in the pathway aminoacyl-tRNA biosynthesis; selenocysteinyl-tRNA(Sec) biosynthesis; L-seryl-tRNA(Sec) from L-serine and tRNA(Sec): step 1/1. Catalyzes the attachment of serine to tRNA(Ser). Is also able to aminoacylate tRNA(Sec) with serine, to form the misacylated tRNA L-seryl-tRNA(Sec), which will be further converted into selenocysteinyl-tRNA(Sec). The chain is Serine--tRNA ligase from Saccharolobus islandicus (strain M.14.25 / Kamchatka #1) (Sulfolobus islandicus).